Reading from the N-terminus, the 240-residue chain is NKG2-E type II integral membrane protein (240 aa).

Positions 1–12 (MSKQRGTFSEVS) are enriched in polar residues. Residues 1 to 31 (MSKQRGTFSEVSLAQDPKWQQRKPKGNKSSI) are disordered. Residues 1-70 (MSKQRGTFSE…CQGLLPPPEK (70 aa)) lie on the Cytoplasmic side of the membrane. A helical; Signal-anchor for type II membrane protein transmembrane segment spans residues 71–93 (LTAEVLGIICIVLMATVLKTIVL). The Extracellular segment spans residues 94-240 (IPFLEQNNSS…IMLTRLVLNS (147 aa)). A glycan (N-linked (GlcNAc...) asparagine) is linked at N100. The 115-residue stretch at 116-230 (HCPEEWITYS…GSSRIIRRGF (115 aa)) folds into the C-type lectin domain. A disulfide bridge links C117 with C128. N-linked (GlcNAc...) asparagine glycans are attached at residues N149 and N179. Cysteines 207 and 220 form a disulfide.

In terms of assembly, can form disulfide-bonded heterodimer with CD94. As to expression, natural killer cells.

The protein localises to the membrane. Functionally, plays a role as a receptor for the recognition of MHC class I HLA-E molecules by NK cells and some cytotoxic T-cells. The polypeptide is NKG2-E type II integral membrane protein (KLRC3) (Homo sapiens (Human)).